Consider the following 115-residue polypeptide: Large ribosomal subunit protein bL20 (115 aa).

It belongs to the bacterial ribosomal protein bL20 family.

Binds directly to 23S ribosomal RNA and is necessary for the in vitro assembly process of the 50S ribosomal subunit. It is not involved in the protein synthesizing functions of that subunit. In Chlorobium limicola (strain DSM 245 / NBRC 103803 / 6330), this protein is Large ribosomal subunit protein bL20.